Consider the following 436-residue polypeptide: ABC transporter permease YtrF (436 aa).

Residues 1–31 (MRFKDQVHFIRRNMKKNRLRVFMTILATTMA) form the signal peptide. Residue Cys32 is the site of N-palmitoyl cysteine attachment. The S-diacylglycerol cysteine moiety is linked to residue Cys32. A coiled-coil region spans residues 115–165 (NMNDELKANMELEKGRVAKSENEIVVGYDFAKRLLTKKESEEYNKKIEEAK). A run of 3 helical transmembrane segments spans residues 293–313 (FKIGLIFVGCIAVIISAIGIF), 350–370 (YIGILGCVIGIIISYGVSYLV), and 396–416 (IPASLVIIAVVICGGVAVISG).

This sequence belongs to the ABC-4 integral membrane protein family. As to quaternary structure, the complex is composed of 2 ATP-binding proteins (YtrB and YtrE), 2 transmembrane proteins (YtrC and YtrD) and a solute-binding protein (YtrF).

It localises to the cell membrane. Its function is as follows. Part of the ABC transporter complex YtrBCDEF that plays a role in acetoin utilization during stationary phase and sporulation. The protein is ABC transporter permease YtrF (ytrF) of Bacillus subtilis (strain 168).